We begin with the raw amino-acid sequence, 338 residues long: Inositol 2-dehydrogenase (338 aa).

It belongs to the Gfo/Idh/MocA family. In terms of assembly, homotetramer.

The enzyme catalyses myo-inositol + NAD(+) = scyllo-inosose + NADH + H(+). Its function is as follows. Involved in the oxidation of myo-inositol (MI) to 2-keto-myo-inositol (2KMI or 2-inosose). The chain is Inositol 2-dehydrogenase from Azotobacter vinelandii (strain DJ / ATCC BAA-1303).